We begin with the raw amino-acid sequence, 185 residues long: Threonylcarbamoyl-AMP synthase (185 aa).

A YrdC-like domain is found at 7–185 (AAQRRAARAH…IDFASGRVLR (179 aa)).

Belongs to the SUA5 family. TsaC subfamily.

The protein localises to the cytoplasm. It catalyses the reaction L-threonine + hydrogencarbonate + ATP = L-threonylcarbamoyladenylate + diphosphate + H2O. Required for the formation of a threonylcarbamoyl group on adenosine at position 37 (t(6)A37) in tRNAs that read codons beginning with adenine. Catalyzes the conversion of L-threonine, HCO(3)(-)/CO(2) and ATP to give threonylcarbamoyl-AMP (TC-AMP) as the acyladenylate intermediate, with the release of diphosphate. The chain is Threonylcarbamoyl-AMP synthase from Laribacter hongkongensis (strain HLHK9).